The following is a 159-amino-acid chain: MKVKLITVGKLKEKYLKDGIAEYCKRLKRFTKFELEELPDEKIPNNASQAQNTYILEKEGQRILNKISNREFVIVLAIEGKQFSSEKFSQLLSATMLKGYSDLTFVIGGSLGLSQEVKKRASILMSFGLLTLPHQLMRLVFVEQIYRAFMIQEGSPYHK.

S-adenosyl-L-methionine-binding positions include Leu-76, Gly-108, and 127-132; that span reads FGLLTL.

Belongs to the RNA methyltransferase RlmH family. Homodimer.

It localises to the cytoplasm. The catalysed reaction is pseudouridine(1915) in 23S rRNA + S-adenosyl-L-methionine = N(3)-methylpseudouridine(1915) in 23S rRNA + S-adenosyl-L-homocysteine + H(+). Its function is as follows. Specifically methylates the pseudouridine at position 1915 (m3Psi1915) in 23S rRNA. The protein is Ribosomal RNA large subunit methyltransferase H of Streptococcus mutans serotype c (strain ATCC 700610 / UA159).